Consider the following 388-residue polypeptide: Norsolorinic acid reductase (388 aa).

Tyrosine 74 serves as the catalytic Proton donor. Residue 233–243 (GVLGRGQFRSA) coordinates NADP(+).

It belongs to the aldo/keto reductase family. Aldo/keto reductase 2 subfamily.

Its pathway is mycotoxin biosynthesis; aflatoxin biosynthesis. The protein is Norsolorinic acid reductase (norA) of Aspergillus flavus (strain ATCC 200026 / FGSC A1120 / IAM 13836 / NRRL 3357 / JCM 12722 / SRRC 167).